Consider the following 120-residue polypeptide: Large ribosomal subunit protein bL17 (120 aa).

The protein belongs to the bacterial ribosomal protein bL17 family. As to quaternary structure, part of the 50S ribosomal subunit. Contacts protein L32.

The sequence is that of Large ribosomal subunit protein bL17 from Halalkalibacterium halodurans (strain ATCC BAA-125 / DSM 18197 / FERM 7344 / JCM 9153 / C-125) (Bacillus halodurans).